Reading from the N-terminus, the 391-residue chain is Formate-dependent phosphoribosylglycinamide formyltransferase (391 aa).

N(1)-(5-phospho-beta-D-ribosyl)glycinamide contacts are provided by residues 18 to 19 (EL) and glutamate 78. ATP is bound by residues arginine 110, lysine 151, 156 to 161 (SSGKGQ), 191 to 194 (EEFI), and glutamate 199. An ATP-grasp domain is found at 115–305 (DLASKDLKIK…EFELHLRAFL (191 aa)). Residues glutamate 264 and glutamate 276 each contribute to the Mg(2+) site. Residues aspartate 283, lysine 353, and 360 to 361 (RR) each bind N(1)-(5-phospho-beta-D-ribosyl)glycinamide.

This sequence belongs to the PurK/PurT family. In terms of assembly, homodimer.

It carries out the reaction N(1)-(5-phospho-beta-D-ribosyl)glycinamide + formate + ATP = N(2)-formyl-N(1)-(5-phospho-beta-D-ribosyl)glycinamide + ADP + phosphate + H(+). It functions in the pathway purine metabolism; IMP biosynthesis via de novo pathway; N(2)-formyl-N(1)-(5-phospho-D-ribosyl)glycinamide from N(1)-(5-phospho-D-ribosyl)glycinamide (formate route): step 1/1. In terms of biological role, involved in the de novo purine biosynthesis. Catalyzes the transfer of formate to 5-phospho-ribosyl-glycinamide (GAR), producing 5-phospho-ribosyl-N-formylglycinamide (FGAR). Formate is provided by PurU via hydrolysis of 10-formyl-tetrahydrofolate. This is Formate-dependent phosphoribosylglycinamide formyltransferase from Prochlorococcus marinus (strain MIT 9301).